A 369-amino-acid chain; its full sequence is Anhydro-N-acetylmuramic acid kinase (369 aa).

Position 12-19 (12-19) interacts with ATP; the sequence is GTSLDGVD.

Belongs to the anhydro-N-acetylmuramic acid kinase family.

The catalysed reaction is 1,6-anhydro-N-acetyl-beta-muramate + ATP + H2O = N-acetyl-D-muramate 6-phosphate + ADP + H(+). The protein operates within amino-sugar metabolism; 1,6-anhydro-N-acetylmuramate degradation. Its pathway is cell wall biogenesis; peptidoglycan recycling. In terms of biological role, catalyzes the specific phosphorylation of 1,6-anhydro-N-acetylmuramic acid (anhMurNAc) with the simultaneous cleavage of the 1,6-anhydro ring, generating MurNAc-6-P. Is required for the utilization of anhMurNAc either imported from the medium or derived from its own cell wall murein, and thus plays a role in cell wall recycling. This is Anhydro-N-acetylmuramic acid kinase from Actinobacillus pleuropneumoniae serotype 7 (strain AP76).